A 202-amino-acid chain; its full sequence is Holliday junction branch migration complex subunit RuvA (202 aa).

Residues 1 to 62 (MIGYLRGRLH…EDAMELYGFT (62 aa)) form a domain I region. The domain II stretch occupies residues 63 to 141 (RPEELHLFTL…KSGLVDGTET (79 aa)). Residues 141–145 (TEAIP) are flexible linker. The segment at 146-202 (AGGGDNDEALAALLALGYSREEIGPILARVRQELGNAAPTTAVLQAVLKTFGRGGGD) is domain III.

Belongs to the RuvA family. As to quaternary structure, homotetramer. Forms an RuvA(8)-RuvB(12)-Holliday junction (HJ) complex. HJ DNA is sandwiched between 2 RuvA tetramers; dsDNA enters through RuvA and exits via RuvB. An RuvB hexamer assembles on each DNA strand where it exits the tetramer. Each RuvB hexamer is contacted by two RuvA subunits (via domain III) on 2 adjacent RuvB subunits; this complex drives branch migration. In the full resolvosome a probable DNA-RuvA(4)-RuvB(12)-RuvC(2) complex forms which resolves the HJ.

The protein resides in the cytoplasm. Its function is as follows. The RuvA-RuvB-RuvC complex processes Holliday junction (HJ) DNA during genetic recombination and DNA repair, while the RuvA-RuvB complex plays an important role in the rescue of blocked DNA replication forks via replication fork reversal (RFR). RuvA specifically binds to HJ cruciform DNA, conferring on it an open structure. The RuvB hexamer acts as an ATP-dependent pump, pulling dsDNA into and through the RuvAB complex. HJ branch migration allows RuvC to scan DNA until it finds its consensus sequence, where it cleaves and resolves the cruciform DNA. The chain is Holliday junction branch migration complex subunit RuvA from Moorella thermoacetica (strain ATCC 39073 / JCM 9320).